A 519-amino-acid polypeptide reads, in one-letter code: Sterile alpha motif domain-containing protein 1 (519 aa).

Residues 1–11 (MAGPPALPPPE) show a composition bias toward pro residues. 2 disordered regions span residues 1-30 (MAGPPALPPPETAAAATTAAAASSSAASPH) and 87-232 (YKGS…PVSL). The span at 12-29 (TAAAATTAAAASSSAASP) shows a compositional bias: low complexity. Residues 23-99 (SSSAASPHYQ…SISYRNAARV (77 aa)) form the SAMD1-like winged helix (WH) domain. The residue at position 107 (Thr-107) is a Phosphothreonine. Positions 108–133 (PPAPPRVPRGGPAAPPPTPAPPPAPV) are enriched in pro residues. Low complexity predominate over residues 134–147 (AAPTRAPRAAAATA). Ser-150 is modified (phosphoserine). A compositionally biased stretch (low complexity) spans 157–166 (GPRAQRAAPL). The segment covering 167-217 (AAPPPAPAAPPAAAPPAGPRRAPPPAVAAREPPAPPQQQQPPPPQPQPPPE) has biased composition (pro residues). Low complexity predominate over residues 218 to 230 (GGAARAGGPARPV). Residue Ser-242 is modified to Phosphoserine. A compositionally biased stretch (basic and acidic residues) spans 261-271 (EAARGRLERTR). Disordered stretches follow at residues 261-381 (EAAR…PGSC) and 417-439 (PALPGADGTPFGCPPGRKEKPTD). Over residues 308-325 (KEEEDEDEDEEEEEEDNV) the composition is skewed to acidic residues. The region spanning 443–511 (WTVMDVVEYF…KVLQQGHFED (69 aa)) is the SAM domain.

Homopolymerize into a closed pentameric ring. Interacts (via SAM domain) with L3MBTL3 (via SAM domain); the interaction mediates L3MBTL3 binding to chromatin. Interacts (via WH domain) with KDM1A; the interaction modulates KDM1A function. In terms of tissue distribution, expressed to similar levels in different organs. Expressed at higher levels in bone marrow, osteoclasts and spleen. Expressed in vascular smooth muscle cells.

The protein resides in the nucleus. It localises to the chromosome. It is found in the secreted. Functionally, unmethylated CpG islands (CGIs)-binding protein which localizes to H3K4me3-decorated CGIs, where it acts as a transcriptional repressor. Tethers L3MBTL3 to chromatin and interacts with the KDM1A histone demethylase complex to modulate H3K4me2 and H3K4me3 levels at CGIs. Plays a role in atherogenesis by binding with LDL on cell surface and promoting LDL oxidation which leads to the formation of foam cell. In Mus musculus (Mouse), this protein is Sterile alpha motif domain-containing protein 1.